A 361-amino-acid chain; its full sequence is Phospho-N-acetylmuramoyl-pentapeptide-transferase (361 aa).

10 helical membrane passes run 21–41, 72–92, 94–114, 135–155, 169–189, 200–220, 240–260, 263–283, 289–309, and 338–358; these read YITFRTGGAMVTALLISFVIG, TPTMGGLMILIAVIVSTLLWV, LANVYTWIVLLVTVGFGLIGF, LAWTIAIAGVAATWYIAVTPH, LLVNLGWFFIPFAILVMVGAS, GLAIVPIMIAAATFGLIAYLS, LAVFCGALVGAGLGFLWFNAP, MVFMGDTGSLSMGGALGAVSV, LVLAIVGGLFVLEAVSVMVQV, and TVVIRFWIIAAILALVGLSTL.

Belongs to the glycosyltransferase 4 family. MraY subfamily. The cofactor is Mg(2+).

It localises to the cell inner membrane. It catalyses the reaction UDP-N-acetyl-alpha-D-muramoyl-L-alanyl-gamma-D-glutamyl-meso-2,6-diaminopimeloyl-D-alanyl-D-alanine + di-trans,octa-cis-undecaprenyl phosphate = di-trans,octa-cis-undecaprenyl diphospho-N-acetyl-alpha-D-muramoyl-L-alanyl-D-glutamyl-meso-2,6-diaminopimeloyl-D-alanyl-D-alanine + UMP. Its pathway is cell wall biogenesis; peptidoglycan biosynthesis. In terms of biological role, catalyzes the initial step of the lipid cycle reactions in the biosynthesis of the cell wall peptidoglycan: transfers peptidoglycan precursor phospho-MurNAc-pentapeptide from UDP-MurNAc-pentapeptide onto the lipid carrier undecaprenyl phosphate, yielding undecaprenyl-pyrophosphoryl-MurNAc-pentapeptide, known as lipid I. The chain is Phospho-N-acetylmuramoyl-pentapeptide-transferase from Rhodospirillum centenum (strain ATCC 51521 / SW).